Reading from the N-terminus, the 175-residue chain is Thioredoxin-like protein CITRX, chloroplastic (175 aa).

Residues 1-73 (MQAASLAFHP…REDYLVKKLS (73 aa)) constitute a chloroplast transit peptide. The 102-residue stretch at 74–175 (AKEIQELIKG…MMRDIINNDL (102 aa)) folds into the Thioredoxin domain. Catalysis depends on nucleophile residues cysteine 98 and cysteine 101. Cysteine 98 and cysteine 101 are joined by a disulfide.

Belongs to the thioredoxin family. Plant CITRX-type subfamily.

The protein localises to the plastid. Its subcellular location is the chloroplast. Probable thiol-disulfide oxidoreductase that may play a role in proper chloroplast development. In Solanum tuberosum (Potato), this protein is Thioredoxin-like protein CITRX, chloroplastic.